The following is a 350-amino-acid chain: Small ribosomal subunit biogenesis GTPase RsgA (350 aa).

The segment covering 1–17 (MSKNKLSKGQQRRVNAN) has biased composition (polar residues). Residues 1–33 (MSKNKLSKGQQRRVNANHQRRLKTSKEKPDYDD) are disordered. The region spanning 104-273 (TSVLTRPDFY…VIDSPGVREF (170 aa)) is the CP-type G domain. Residues 160–163 (NKID) and 214–222 (GQSGVGKSS) each bind GTP. Zn(2+) contacts are provided by cysteine 297, cysteine 302, histidine 304, and cysteine 310.

Belongs to the TRAFAC class YlqF/YawG GTPase family. RsgA subfamily. As to quaternary structure, monomer. Associates with 30S ribosomal subunit, binds 16S rRNA. Zn(2+) is required as a cofactor.

The protein localises to the cytoplasm. Its function is as follows. One of several proteins that assist in the late maturation steps of the functional core of the 30S ribosomal subunit. Helps release RbfA from mature subunits. May play a role in the assembly of ribosomal proteins into the subunit. Circularly permuted GTPase that catalyzes slow GTP hydrolysis, GTPase activity is stimulated by the 30S ribosomal subunit. The chain is Small ribosomal subunit biogenesis GTPase RsgA from Escherichia coli (strain SMS-3-5 / SECEC).